The following is a 360-amino-acid chain: tRNA-specific 2-thiouridylase MnmA (360 aa).

ATP is bound by residues 8–15 (GMSGGVDS) and Met-34. Positions 94–96 (NPD) are interaction with target base in tRNA. The Nucleophile role is filled by Cys-99. Residues Cys-99 and Cys-195 are joined by a disulfide bond. Gly-123 contacts ATP. Residues 145-147 (KDQ) form an interaction with tRNA region. Catalysis depends on Cys-195, which acts as the Cysteine persulfide intermediate. Positions 307–308 (RY) are interaction with tRNA.

It belongs to the MnmA/TRMU family.

Its subcellular location is the cytoplasm. The enzyme catalyses S-sulfanyl-L-cysteinyl-[protein] + uridine(34) in tRNA + AH2 + ATP = 2-thiouridine(34) in tRNA + L-cysteinyl-[protein] + A + AMP + diphosphate + H(+). Its function is as follows. Catalyzes the 2-thiolation of uridine at the wobble position (U34) of tRNA, leading to the formation of s(2)U34. The polypeptide is tRNA-specific 2-thiouridylase MnmA (Methylobacillus flagellatus (strain ATCC 51484 / DSM 6875 / VKM B-1610 / KT)).